We begin with the raw amino-acid sequence, 310 residues long: GMP synthase [glutamine-hydrolyzing] subunit B (310 aa).

One can recognise a GMPS ATP-PPase domain in the interval 2-185; it reads FDAKSFIEES…LGLPEKIAHR (184 aa). 29–35 provides a ligand contact to ATP; that stretch reads SGGVDSS.

Heterodimer composed of a glutamine amidotransferase subunit (A) and a GMP-binding subunit (B).

It catalyses the reaction XMP + L-glutamine + ATP + H2O = GMP + L-glutamate + AMP + diphosphate + 2 H(+). It functions in the pathway purine metabolism; GMP biosynthesis; GMP from XMP (L-Gln route): step 1/1. Its function is as follows. Catalyzes the synthesis of GMP from XMP. This chain is GMP synthase [glutamine-hydrolyzing] subunit B, found in Methanococcus vannielii (strain ATCC 35089 / DSM 1224 / JCM 13029 / OCM 148 / SB).